The following is an 834-amino-acid chain: Periplasmic nitrate reductase (834 aa).

The segment at residues 1–32 (MTDMKIDRRQMLKLEAAAIAAAAAGMPSTSLA) is a signal peptide (tat-type signal). Positions 44 to 100 (LKWDKAACRFCGTGCSVMVATKDNRVVATHGDIKAEVNRGLNCVKGYFLSKIMYGHD) constitute a 4Fe-4S Mo/W bis-MGD-type domain. [4Fe-4S] cluster-binding residues include C51, C54, C58, and C86. Mo-bis(molybdopterin guanine dinucleotide) contacts are provided by residues K88, Q155, N180, C184, 217 to 224 (WGSNMAEM), 248 to 252 (STFEH), 267 to 269 (QTD), M378, Q382, N488, 514 to 515 (SD), K537, D564, and 724 to 733 (TGRVVEHWHS). A substrate-binding site is contributed by W800. Mo-bis(molybdopterin guanine dinucleotide) contacts are provided by N808 and K825.

The protein belongs to the prokaryotic molybdopterin-containing oxidoreductase family. NasA/NapA/NarB subfamily. Component of the periplasmic nitrate reductase NapAB complex composed of NapA and NapB. [4Fe-4S] cluster serves as cofactor. Mo-bis(molybdopterin guanine dinucleotide) is required as a cofactor. Post-translationally, predicted to be exported by the Tat system. The position of the signal peptide cleavage has not been experimentally proven.

The protein localises to the periplasm. It catalyses the reaction 2 Fe(II)-[cytochrome] + nitrate + 2 H(+) = 2 Fe(III)-[cytochrome] + nitrite + H2O. Its function is as follows. Catalytic subunit of the periplasmic nitrate reductase complex NapAB. Receives electrons from NapB and catalyzes the reduction of nitrate to nitrite. The polypeptide is Periplasmic nitrate reductase (Bradyrhizobium sp. (strain BTAi1 / ATCC BAA-1182)).